Here is a 263-residue protein sequence, read N- to C-terminus: L-aspartate dehydrogenase (263 aa).

NAD(+) is bound by residues alanine 120 and asparagine 186. Histidine 216 is a catalytic residue.

The protein belongs to the L-aspartate dehydrogenase family.

The enzyme catalyses L-aspartate + NADP(+) + H2O = oxaloacetate + NH4(+) + NADPH + H(+). The catalysed reaction is L-aspartate + NAD(+) + H2O = oxaloacetate + NH4(+) + NADH + H(+). The protein operates within cofactor biosynthesis; NAD(+) biosynthesis; iminoaspartate from L-aspartate (dehydrogenase route): step 1/1. Functionally, specifically catalyzes the NAD or NADP-dependent dehydrogenation of L-aspartate to iminoaspartate. The protein is L-aspartate dehydrogenase of Psychrobacter cryohalolentis (strain ATCC BAA-1226 / DSM 17306 / VKM B-2378 / K5).